Reading from the N-terminus, the 503-residue chain is AMP phosphorylase (503 aa).

Residues glycine 168, 194 to 199 (SRAITS), and threonine 203 each bind AMP. Residue aspartate 256 is the Proton donor of the active site. 2 residues coordinate AMP: serine 264 and lysine 288.

It belongs to the thymidine/pyrimidine-nucleoside phosphorylase family. Type 2 subfamily. As to quaternary structure, forms an exceptionally large macromolecular structure (&gt;40-mers) in solution.

It carries out the reaction AMP + phosphate = alpha-D-ribose 1,5-bisphosphate + adenine. It catalyses the reaction CMP + phosphate = cytosine + alpha-D-ribose 1,5-bisphosphate. The catalysed reaction is UMP + phosphate = alpha-D-ribose 1,5-bisphosphate + uracil. AMP phosphorolysis is allosterically regulated by the substrate AMP. Catalyzes the conversion of AMP and phosphate to adenine and ribose 1,5-bisphosphate (R15P). Exhibits phosphorylase activity toward CMP, dCMP and UMP in addition to AMP. Functions in an archaeal AMP degradation pathway, together with R15P isomerase and RubisCO. This Thermococcus kodakarensis (strain ATCC BAA-918 / JCM 12380 / KOD1) (Pyrococcus kodakaraensis (strain KOD1)) protein is AMP phosphorylase.